Consider the following 188-residue polypeptide: MSKLSEIEALLFVAGEDGLKVRQIAEILSIPPTGVSQSLEKLTAKYEADADCSLALLETSNTYKLVTKQAFAELLRAYSKSPINQSLSRAALETLSIIAYKQPITRVEIDDIRGVNSSGALAKLLAFELVREDGKKEVLGRPNLYVTTEYFLDYMGINHLEELPVVTDTELVAEESQLFGQATESELE.

Belongs to the ScpB family. In terms of assembly, homodimer. Homodimerization may be required to stabilize the binding of ScpA to the Smc head domains. Component of a cohesin-like complex composed of ScpA, ScpB and the Smc homodimer, in which ScpA and ScpB bind to the head domain of Smc. The presence of the three proteins is required for the association of the complex with DNA.

Its subcellular location is the cytoplasm. In terms of biological role, participates in chromosomal partition during cell division. May act via the formation of a condensin-like complex containing Smc and ScpA that pull DNA away from mid-cell into both cell halves. The protein is Segregation and condensation protein B of Streptococcus gordonii (strain Challis / ATCC 35105 / BCRC 15272 / CH1 / DL1 / V288).